Here is a 1147-residue protein sequence, read N- to C-terminus: Nucleolar protein 6 (1147 aa).

The tract at residues 1–49 is disordered; sequence MQKKRSRAGAAEQEAASDDGEMSDSSDKMEVSQNKGKSGIKRAPEADDV. Over residues 15-24 the composition is skewed to acidic residues; it reads AASDDGEMSD.

The protein belongs to the NRAP family. In terms of assembly, part of the small subunit (SSU) processome, composed of more than 70 proteins and the RNA chaperone small nucleolar RNA (snoRNA) U3.

Its subcellular location is the nucleus. It localises to the nucleolus. The protein resides in the chromosome. Its function is as follows. Part of the small subunit (SSU) processome, first precursor of the small eukaryotic ribosomal subunit. During the assembly of the SSU processome in the nucleolus, many ribosome biogenesis factors, an RNA chaperone and ribosomal proteins associate with the nascent pre-rRNA and work in concert to generate RNA folding, modifications, rearrangements and cleavage as well as targeted degradation of pre-ribosomal RNA by the RNA exosome. This Xenopus laevis (African clawed frog) protein is Nucleolar protein 6 (nol6).